The primary structure comprises 316 residues: Very-long-chain 3-oxooacyl-coA reductase let-767 (316 aa).

NADP(+) contacts are provided by residues 52-80 and aspartate 106; that span reads ITGA…VSRT. Serine 189 is a binding site for substrate. Catalysis depends on tyrosine 202, which acts as the Proton acceptor. Lysine 206 contributes to the NADP(+) binding site.

This sequence belongs to the short-chain dehydrogenases/reductases (SDR) family. 17-beta-HSD 3 subfamily.

The enzyme catalyses a very-long-chain (3R)-3-hydroxyacyl-CoA + NADP(+) = a very-long-chain 3-oxoacyl-CoA + NADPH + H(+). It functions in the pathway lipid metabolism; fatty acid biosynthesis. In terms of biological role, required for branched chain fatty acid synthesis. Catalyzes the reduction of the 3-ketoacyl-CoA intermediate that is formed in each cycle of fatty acid elongation. Very long-chain fatty acids (VLCFAs) serve as precursors for ceramide and sphingolipids. May also be required for sterol hormone production. This Caenorhabditis briggsae protein is Very-long-chain 3-oxooacyl-coA reductase let-767.